Consider the following 227-residue polypeptide: Ribosomal RNA large subunit methyltransferase E (227 aa).

Residues Gly78, Trp80, Asp103, Asp119, and Asp143 each coordinate S-adenosyl-L-methionine. The Proton acceptor role is filled by Lys183.

It belongs to the class I-like SAM-binding methyltransferase superfamily. RNA methyltransferase RlmE family.

Its subcellular location is the cytoplasm. The catalysed reaction is uridine(2552) in 23S rRNA + S-adenosyl-L-methionine = 2'-O-methyluridine(2552) in 23S rRNA + S-adenosyl-L-homocysteine + H(+). Specifically methylates the uridine in position 2552 of 23S rRNA at the 2'-O position of the ribose in the fully assembled 50S ribosomal subunit. The sequence is that of Ribosomal RNA large subunit methyltransferase E from Rickettsia canadensis (strain McKiel).